Consider the following 347-residue polypeptide: uncharacterized protein (347 aa).

This is an uncharacterized protein from Invertebrate iridescent virus 3 (IIV-3).